A 269-amino-acid polypeptide reads, in one-letter code: GTP cyclohydrolase FolE2 (269 aa).

It belongs to the GTP cyclohydrolase IV family.

It catalyses the reaction GTP + H2O = 7,8-dihydroneopterin 3'-triphosphate + formate + H(+). It functions in the pathway cofactor biosynthesis; 7,8-dihydroneopterin triphosphate biosynthesis; 7,8-dihydroneopterin triphosphate from GTP: step 1/1. Its function is as follows. Converts GTP to 7,8-dihydroneopterin triphosphate. In Azoarcus sp. (strain BH72), this protein is GTP cyclohydrolase FolE2.